A 312-amino-acid chain; its full sequence is 4-diphosphocytidyl-2-C-methyl-D-erythritol kinase (312 aa).

Lysine 16 is a catalytic residue. An ATP-binding site is contributed by 101-111; sequence PIGAGLAGGSS. The active site involves aspartate 143.

It belongs to the GHMP kinase family. IspE subfamily.

The catalysed reaction is 4-CDP-2-C-methyl-D-erythritol + ATP = 4-CDP-2-C-methyl-D-erythritol 2-phosphate + ADP + H(+). It functions in the pathway isoprenoid biosynthesis; isopentenyl diphosphate biosynthesis via DXP pathway; isopentenyl diphosphate from 1-deoxy-D-xylulose 5-phosphate: step 3/6. Its function is as follows. Catalyzes the phosphorylation of the position 2 hydroxy group of 4-diphosphocytidyl-2C-methyl-D-erythritol. This chain is 4-diphosphocytidyl-2-C-methyl-D-erythritol kinase, found in Prochlorococcus marinus (strain MIT 9515).